A 54-amino-acid polypeptide reads, in one-letter code: Protein YmjE (54 aa).

The sequence is that of Protein YmjE from Escherichia coli (strain K12).